The primary structure comprises 469 residues: Glutamate--tRNA ligase (469 aa).

Residues 9 to 19 carry the 'HIGH' region motif; that stretch reads PSPTGFLHVGG. Zn(2+) contacts are provided by C98, C100, C125, and D127. The short motif at 236–240 is the 'KMSKS' region element; sequence KLSKR. K239 lines the ATP pocket.

Belongs to the class-I aminoacyl-tRNA synthetase family. Glutamate--tRNA ligase type 1 subfamily. As to quaternary structure, monomer. Zn(2+) is required as a cofactor.

The protein resides in the cytoplasm. The catalysed reaction is tRNA(Glu) + L-glutamate + ATP = L-glutamyl-tRNA(Glu) + AMP + diphosphate. Catalyzes the attachment of glutamate to tRNA(Glu) in a two-step reaction: glutamate is first activated by ATP to form Glu-AMP and then transferred to the acceptor end of tRNA(Glu). This is Glutamate--tRNA ligase from Shewanella sp. (strain MR-4).